An 88-amino-acid polypeptide reads, in one-letter code: Small ribosomal subunit protein bS20 (88 aa).

Disordered regions lie at residues 1–29 and 69–88; these read MANT…SKLR and KNTA…AMAA.

This sequence belongs to the bacterial ribosomal protein bS20 family.

Binds directly to 16S ribosomal RNA. The polypeptide is Small ribosomal subunit protein bS20 (Polynucleobacter asymbioticus (strain DSM 18221 / CIP 109841 / QLW-P1DMWA-1) (Polynucleobacter necessarius subsp. asymbioticus)).